The primary structure comprises 500 residues: Aspartyl/glutamyl-tRNA(Asn/Gln) amidotransferase subunit B (500 aa).

It belongs to the GatB/GatE family. GatB subfamily. In terms of assembly, heterotrimer of A, B and C subunits.

The enzyme catalyses L-glutamyl-tRNA(Gln) + L-glutamine + ATP + H2O = L-glutaminyl-tRNA(Gln) + L-glutamate + ADP + phosphate + H(+). It catalyses the reaction L-aspartyl-tRNA(Asn) + L-glutamine + ATP + H2O = L-asparaginyl-tRNA(Asn) + L-glutamate + ADP + phosphate + 2 H(+). Its function is as follows. Allows the formation of correctly charged Asn-tRNA(Asn) or Gln-tRNA(Gln) through the transamidation of misacylated Asp-tRNA(Asn) or Glu-tRNA(Gln) in organisms which lack either or both of asparaginyl-tRNA or glutaminyl-tRNA synthetases. The reaction takes place in the presence of glutamine and ATP through an activated phospho-Asp-tRNA(Asn) or phospho-Glu-tRNA(Gln). In Rhizobium etli (strain CIAT 652), this protein is Aspartyl/glutamyl-tRNA(Asn/Gln) amidotransferase subunit B.